We begin with the raw amino-acid sequence, 701 residues long: Probable cytosolic oligopeptidase A (701 aa).

Ala2 carries the post-translational modification N-acetylalanine. The stretch at 148 to 194 (IALEDDKREEFNKIEQELEKLSHKFSENVLDATKKFEKLITDKKEIE) forms a coiled coil. His483 serves as a coordination point for Zn(2+). The active site involves Glu484. Residues His487 and Glu513 each contribute to the Zn(2+) site. A substrate-binding site is contributed by 615–621 (HIFAGGY).

The protein belongs to the peptidase M3 family. The cofactor is Zn(2+).

It is found in the cytoplasm. It localises to the cytosol. It carries out the reaction Hydrolysis of oligopeptides, with broad specificity. Gly or Ala commonly occur as P1 or P1' residues, but more distant residues are also important, as is shown by the fact that Z-Gly-Pro-Gly-|-Gly-Pro-Ala is cleaved, but not Z-(Gly)(5).. Its activity is regulated as follows. Inhibited by salicylic acid. Functionally, oligopeptidase that may be involved in the degradation of proteasome-generated peptides. Binds salicylic acid. In Arabidopsis thaliana (Mouse-ear cress), this protein is Probable cytosolic oligopeptidase A.